Consider the following 274-residue polypeptide: NAD(P)H dehydrogenase [quinone] 1 (274 aa).

A2 is modified (N-acetylalanine). Residues H12, F18–N19, and Q67 each bind FAD. The residue at position 82 (S82) is a Phosphoserine. L104–F107 lines the FAD pocket. A126–T128 contacts substrate. Residues T148–G151, Y156, and R201 contribute to the FAD site. The segment at P225–K274 is important for apoenzyme conformational stability. Residue K251 forms a Glycyl lysine isopeptide (Lys-Gly) (interchain with G-Cter in SUMO2) linkage.

Belongs to the NAD(P)H dehydrogenase (quinone) family. As to quaternary structure, homodimer. Interacts with PDLIM4 isoform 2; this interaction stabilizes PDLIM4 isoform 2 in response to oxidative stress and protects it from ubiquitin-independent degradation by the core 20S proteasome. Interacts with TP73 (via SAM domain); this interaction is NADH-dependent, stabilizes TP73 in response to oxidative stress and protects it from ubiquitin-independent degradation by the 20S proteasome. Interacts with TP53; this interaction is NADH-dependent, stabilizes TP53 in response to oxidative stress and protects it from ubiquitin-independent degradation by the 20S proteasome. It depends on FAD as a cofactor.

The protein resides in the cytoplasm. It localises to the cytosol. The enzyme catalyses a quinone + NADH + H(+) = a quinol + NAD(+). It carries out the reaction a quinone + NADPH + H(+) = a quinol + NADP(+). The catalysed reaction is ubiquinone-10 + NADH + H(+) = ubiquinol-10 + NAD(+). It catalyses the reaction menadione + NADH + H(+) = menadiol + NAD(+). Functionally, flavin-containing quinone reductase that catalyzes two-electron reduction of quinones to hydroquinones using either NADH or NADPH as electron donors. In a ping-pong kinetic mechanism, the electrons are sequentially transferred from NAD(P)H to flavin cofactor and then from reduced flavin to the quinone, bypassing the formation of semiquinone and reactive oxygen species. Regulates cellular redox state primarily through quinone detoxification. Reduces components of plasma membrane redox system such as coenzyme Q and vitamin quinones, producing antioxidant hydroquinone forms. In the process may function as superoxide scavenger to prevent hydroquinone oxidation and facilitate excretion. Alternatively, can activate quinones and their derivatives by generating redox reactive hydroquinones with DNA cross-linking antitumor potential. Acts as a gatekeeper of the core 20S proteasome known to degrade proteins with unstructured regions. Upon oxidative stress, interacts with tumor suppressors TP53 and TP73 in a NADH-dependent way and inhibits their ubiquitin-independent degradation by the 20S proteasome. The polypeptide is NAD(P)H dehydrogenase [quinone] 1 (Nqo1) (Rattus norvegicus (Rat)).